A 368-amino-acid chain; its full sequence is Agmatine deiminase (368 aa).

The active-site Amidino-cysteine intermediate is Cys357.

Belongs to the agmatine deiminase family. As to quaternary structure, homodimer.

The catalysed reaction is agmatine + H2O = N-carbamoylputrescine + NH4(+). It participates in amine and polyamine biosynthesis; putrescine biosynthesis via agmatine pathway; N-carbamoylputrescine from agmatine: step 1/1. Mediates the hydrolysis of agmatine into N-carbamoylputrescine in the arginine decarboxylase (ADC) pathway of putrescine biosynthesis, a basic polyamine. The sequence is that of Agmatine deiminase from Pseudomonas syringae pv. tomato (strain ATCC BAA-871 / DC3000).